The sequence spans 192 residues: Thymidine kinase (192 aa).

Residues 9–16 (SAMNAGKS) and 87–90 (DECQ) each bind ATP. Catalysis depends on Glu88, which acts as the Proton acceptor. The Zn(2+) site is built by Cys145, Cys147, Cys182, and His185.

This sequence belongs to the thymidine kinase family. Homotetramer.

It is found in the cytoplasm. It carries out the reaction thymidine + ATP = dTMP + ADP + H(+). The protein is Thymidine kinase of Vibrio cholerae serotype O1 (strain ATCC 39315 / El Tor Inaba N16961).